We begin with the raw amino-acid sequence, 316 residues long: tRNA dimethylallyltransferase (316 aa).

17–24 (GPTASGKT) provides a ligand contact to ATP. Substrate is bound at residue 19 to 24 (TASGKT). Interaction with substrate tRNA stretches follow at residues 42–45 (DSAL), 166–170 (QRLSR), 247–252 (RCVGYR), and 280–287 (KRQITWLR).

This sequence belongs to the IPP transferase family. Monomer. Mg(2+) serves as cofactor.

It catalyses the reaction adenosine(37) in tRNA + dimethylallyl diphosphate = N(6)-dimethylallyladenosine(37) in tRNA + diphosphate. Catalyzes the transfer of a dimethylallyl group onto the adenine at position 37 in tRNAs that read codons beginning with uridine, leading to the formation of N6-(dimethylallyl)adenosine (i(6)A). The protein is tRNA dimethylallyltransferase of Escherichia coli O45:K1 (strain S88 / ExPEC).